The following is a 370-amino-acid chain: Lysophosphatidic acid receptor 4 (370 aa).

At 1–43 (MGDRRFIDFQFQDLNSSLRPRLGNATANNTCIVDDSFKYNLNG) the chain is on the extracellular side. N-linked (GlcNAc...) asparagine glycosylation is found at Asn-15, Asn-24, and Asn-28. Residues 44–64 (AVYSVVFILGLITNSASLFVF) form a helical membrane-spanning segment. Over 65-73 (CFRMKMRSE) the chain is Cytoplasmic. The helical transmembrane segment at 74 to 94 (TAIFITNLALSDLLFVCTLPF) threads the bilayer. The Extracellular segment spans residues 95–112 (KIFYNFNRHWPFGDTLCK). Cys-111 and Cys-188 form a disulfide bridge. The chain crosses the membrane as a helical span at residues 113-133 (ISGTAFLTNIYGSMLFLTCIS). Topologically, residues 134-155 (VDRFLAIVYPFRSRTIRTRRNS) are cytoplasmic. The helical transmembrane segment at 156-176 (AIVCAGVWILVLSGGISASLF) threads the bilayer. The Extracellular portion of the chain corresponds to 177–203 (STTNVNNATTTCFEGFSKRVWKTYLSK). Asn-183 carries an N-linked (GlcNAc...) asparagine glycan. A helical membrane pass occupies residues 204–224 (ITIFIEVVGFIIPLILNVSCS). Topologically, residues 225 to 254 (SVVLRTLRKPATLSQIGTNKKKVLKMITVH) are cytoplasmic. Residues 255 to 275 (MAVFVVCFVPYNSVLFLYALV) form a helical membrane-spanning segment. Residues 276–294 (RSQAITNCLLERFAKIMYP) are Extracellular-facing. A helical membrane pass occupies residues 295–315 (ITLCLATLNCCFDPFIYYFTL). Residues 316–370 (ESFQKSFYINTHIRMESLFKTETPLTPKPSLPAIQEEVSDQTTNNGGELMLESTF) are Cytoplasmic-facing.

Belongs to the G-protein coupled receptor 1 family.

It is found in the cell membrane. Its function is as follows. Receptor for lysophosphatidic acid (LPA), a mediator of diverse cellular activities. Transduces a signal by increasing the intracellular calcium ions and by stimulating adenylyl cyclase activity. The rank order of potency for agonists of this receptor is 1-oleoyl- &gt; 1-stearoyl- &gt; 1-palmitoyl- &gt; 1-myristoyl- &gt; 1-alkyl- &gt; 1-alkenyl-LPA. This chain is Lysophosphatidic acid receptor 4 (Lpar4), found in Mus musculus (Mouse).